The following is a 361-amino-acid chain: DNA replication and repair protein RecF (361 aa).

An ATP-binding site is contributed by 30 to 37 (GANGSGKT).

This sequence belongs to the RecF family.

Its subcellular location is the cytoplasm. In terms of biological role, the RecF protein is involved in DNA metabolism; it is required for DNA replication and normal SOS inducibility. RecF binds preferentially to single-stranded, linear DNA. It also seems to bind ATP. The sequence is that of DNA replication and repair protein RecF from Chromohalobacter salexigens (strain ATCC BAA-138 / DSM 3043 / CIP 106854 / NCIMB 13768 / 1H11).